Consider the following 233-residue polypeptide: Demethylmenaquinone methyltransferase (233 aa).

Residues Thr-58, Asp-79, and 106 to 107 contribute to the S-adenosyl-L-methionine site; that span reads NA.

Belongs to the class I-like SAM-binding methyltransferase superfamily. MenG/UbiE family.

The enzyme catalyses a 2-demethylmenaquinol + S-adenosyl-L-methionine = a menaquinol + S-adenosyl-L-homocysteine + H(+). It participates in quinol/quinone metabolism; menaquinone biosynthesis; menaquinol from 1,4-dihydroxy-2-naphthoate: step 2/2. Its function is as follows. Methyltransferase required for the conversion of demethylmenaquinol (DMKH2) to menaquinol (MKH2). The sequence is that of Demethylmenaquinone methyltransferase from Bacillus subtilis (strain 168).